The following is a 588-amino-acid chain: Aspartate--tRNA ligase (588 aa).

Residue glutamate 174 participates in L-aspartate binding. Residues glutamine 198–lysine 201 are aspartate. Arginine 220 provides a ligand contact to L-aspartate. Residues arginine 220 to glutamate 222 and glutamine 229 each bind ATP. Histidine 448 is a binding site for L-aspartate. Glutamate 482 serves as a coordination point for ATP. Residue arginine 489 participates in L-aspartate binding. Residue glycine 534 to arginine 537 participates in ATP binding.

It belongs to the class-II aminoacyl-tRNA synthetase family. Type 1 subfamily. In terms of assembly, homodimer.

Its subcellular location is the cytoplasm. It carries out the reaction tRNA(Asp) + L-aspartate + ATP = L-aspartyl-tRNA(Asp) + AMP + diphosphate. Catalyzes the attachment of L-aspartate to tRNA(Asp) in a two-step reaction: L-aspartate is first activated by ATP to form Asp-AMP and then transferred to the acceptor end of tRNA(Asp). The sequence is that of Aspartate--tRNA ligase from Xanthomonas campestris pv. campestris (strain B100).